A 273-amino-acid chain; its full sequence is Large ribosomal subunit protein uL2cz/uL2cy (273 aa).

Disordered stretches follow at residues 1-23 (MAIH…SQVK) and 224-273 (NPVD…RRRK). A compositionally biased stretch (basic and acidic residues) spans 262 to 273 (KYSDRFILRRRK).

It belongs to the universal ribosomal protein uL2 family. Part of the 50S ribosomal subunit.

It localises to the plastid. The protein resides in the chloroplast. This is Large ribosomal subunit protein uL2cz/uL2cy (rpl2-A) from Acorus calamus var. americanus (American sweet flag).